The primary structure comprises 60 residues: Large ribosomal subunit protein uL30 (60 aa).

Belongs to the universal ribosomal protein uL30 family. Part of the 50S ribosomal subunit.

The polypeptide is Large ribosomal subunit protein uL30 (Syntrophobacter fumaroxidans (strain DSM 10017 / MPOB)).